A 765-amino-acid chain; its full sequence is SNF-related serine/threonine-protein kinase (765 aa).

A Protein kinase domain is found at 16–269 (YDLDKTLGRG…LEEIENHPWL (254 aa)). Residues 22-30 (LGRGHFAVV) and lysine 45 each bind ATP. The Proton acceptor role is filled by aspartate 139. Serine 162 carries the phosphoserine modification. A Phosphothreonine; by LKB1 modification is found at threonine 173. The 44-residue stretch at 291-334 (SEEEHNSIIQRMVLGDIADRDAIVEALETNRYNHITATYFLLAE) folds into the UBA domain. A phosphoserine mark is found at serine 362, serine 390, serine 482, serine 495, and serine 518. Positions 512–634 (LKMNIASPGT…RCAGPSNSMQ (123 aa)) are disordered. Positions 522–532 (VHKRYHRRKSQ) are enriched in basic residues. The segment covering 533–542 (GRGSSCSSSE) has biased composition (low complexity). Position 534 is an omega-N-methylarginine (arginine 534). A compositionally biased stretch (basic and acidic residues) spans 549 to 558 (ESRRRLDKDS). Residues 603-614 (AGGGSPSSGSGG) show a composition bias toward gly residues. Serine 607 is subject to Phosphoserine.

The protein belongs to the protein kinase superfamily. CAMK Ser/Thr protein kinase family. It depends on Mg(2+) as a cofactor. In terms of processing, autophosphorylated. Phosphorylation on Thr-173 by STK11/LKB1 in complex with STE20-related adapter-alpha (STRADA) pseudo kinase and CAB39. In terms of tissue distribution, expressed in hematopoietic progenitor cells and leukemic cell lines. Weakly expressed in the testis.

Its subcellular location is the nucleus. It catalyses the reaction L-seryl-[protein] + ATP = O-phospho-L-seryl-[protein] + ADP + H(+). It carries out the reaction L-threonyl-[protein] + ATP = O-phospho-L-threonyl-[protein] + ADP + H(+). Activated by phosphorylation on Thr-173. Functionally, may play a role in hematopoietic cell proliferation or differentiation. Potential mediator of neuronal apoptosis. This chain is SNF-related serine/threonine-protein kinase, found in Homo sapiens (Human).